A 1530-amino-acid chain; its full sequence is B-cell CLL/lymphoma 9-like protein (1530 aa).

Disordered stretches follow at residues 1–101 (MHSE…VLEP), 155–187 (QGHSGSSTTGHVSDPGGPGLGSGHGPGIRTDLH), 246–353 (HISS…PSVL), 398–439 (SGTG…IGGG), 473–503 (QTQNLGGPGLDDSLMGPHHGMPPHSHHLSSP), 821–1076 (QNGR…QNPL), 1250–1279 (KGMSHQRPPHQPDSFPPMPMGDGPDLSEVI), and 1310–1331 (SETMSQPQQNPHQGQPPPQVSS). Positions 8–18 (SNHGKQVTSGA) are enriched in polar residues. Over residues 19–34 (QSQLPNVNQAQQQAPA) the composition is skewed to low complexity. Positions 81–93 (ERSVSIDTGDQRE) are enriched in basic and acidic residues. The span at 156–165 (GHSGSSTTGH) shows a compositional bias: low complexity. Residues 170-180 (GGPGLGSGHGP) are compositionally biased toward gly residues. 2 stretches are compositionally biased toward polar residues: residues 247-264 (ISSSHSPPIGTPKSQSGT) and 278-287 (GTSTPSSTGH). 2 stretches are compositionally biased toward low complexity: residues 409-426 (GPNGNPNGTNVNNNNSND) and 485-503 (SLMGPHHGMPPHSHHLSSP). Composition is skewed to polar residues over residues 875–891 (LSSTSRLSHIPMNTGSR), 920–930 (QLKSPSLSQEP), and 944–953 (SPSQLPQSGP). 3 stretches are compositionally biased toward low complexity: residues 960–971 (AASGAGTPSSTS), 979–994 (GPSLGLRSPSGSPGHL), and 1031–1060 (SSSTDTGMSLPPRSSNSTPISQPSNSINPS). A compositionally biased stretch (pro residues) spans 1258–1268 (PHQPDSFPPMP).

It belongs to the BCL9 family.

The protein resides in the nucleus. Transcriptional regulator that may act as an activator. Plays a role for mesoderm patterning in early embryogenesis. This chain is B-cell CLL/lymphoma 9-like protein (bcl9l), found in Danio rerio (Zebrafish).